The following is a 300-amino-acid chain: L-arabinolactonase (300 aa).

Positions 22, 156, and 205 each coordinate a divalent metal cation.

Belongs to the SMP-30/CGR1 family. Requires a divalent metal cation as cofactor.

The enzyme catalyses L-arabinono-1,4-lactone + H2O = L-arabinonate + H(+). Functionally, catalyzes the cleavage of L-arabino-gamma-lactone to L-arabonate. Is involved in a degradation pathway of L-arabinose that allows A.brasilense to grow on L-arabinose as a sole carbon source. Can also use D-galactono-1,4-lactone as substrate in vitro; however, the enzyme is probably not involved in the metabolism of D-galactose in vivo. The polypeptide is L-arabinolactonase (araB) (Azospirillum brasilense).